The primary structure comprises 237 residues: Adenosine 5'-phosphosulfate reductase (237 aa).

4 residues coordinate [4Fe-4S] cluster: Cys-123, Cys-124, Cys-206, and Cys-209. The active-site Nucleophile; cysteine thiosulfonate intermediate is the Cys-232.

It belongs to the PAPS reductase family. CysH subfamily. Requires [4Fe-4S] cluster as cofactor.

It is found in the cytoplasm. It catalyses the reaction [thioredoxin]-disulfide + sulfite + AMP + 2 H(+) = adenosine 5'-phosphosulfate + [thioredoxin]-dithiol. It participates in sulfur metabolism; hydrogen sulfide biosynthesis; sulfite from sulfate. Catalyzes the formation of sulfite from adenosine 5'-phosphosulfate (APS) using thioredoxin as an electron donor. The chain is Adenosine 5'-phosphosulfate reductase from Mycobacteroides abscessus (strain ATCC 19977 / DSM 44196 / CCUG 20993 / CIP 104536 / JCM 13569 / NCTC 13031 / TMC 1543 / L948) (Mycobacterium abscessus).